Consider the following 881-residue polypeptide: Leucine--tRNA ligase (881 aa).

The 'HIGH' region signature appears at 48–58; that stretch reads PYPSGKLHMGH. Positions 638–642 match the 'KMSKS' region motif; the sequence is KMSKS. An ATP-binding site is contributed by K641.

It belongs to the class-I aminoacyl-tRNA synthetase family.

It localises to the cytoplasm. It carries out the reaction tRNA(Leu) + L-leucine + ATP = L-leucyl-tRNA(Leu) + AMP + diphosphate. The protein is Leucine--tRNA ligase of Herminiimonas arsenicoxydans.